The chain runs to 201 residues: MRALLLSGCLALVLLTQQAAAQTLLVVGDSISAALGLDTSQGWVALLQKRLADEGYDYRVVNASISGDTSAGGLARLPALLAEEKPALVVIELGGNDGLRGMAPAQLQQNLASMAQKARAEGAKVLLLGIQLPPNYGPRYIEAFSRVYGAVAAQEKTALVPFFLEGVGGVQGMMQADGIHPALAAQPRLLENVWPTLKPLL.

The first 21 residues, 1–21, serve as a signal peptide directing secretion; sequence MRALLLSGCLALVLLTQQAAA. Catalysis depends on S30, which acts as the Nucleophile. Residues D177 and H180 contribute to the active site.

This sequence belongs to the 'GDSL' lipolytic enzyme family.

It localises to the secreted. It catalyses the reaction a carboxylic ester + H2O = an alcohol + a carboxylate + H(+). Functionally, esterase that exhibits the highest activity towards Tween detergents and p-nitrophenyl esters of short acyl chain length. Also displays a low thioesterase activity towards palmitoyl-coenzyme A, but is not active towards acetyl-coenzyme A. The protein is Esterase TesA (tesA) of Pseudomonas aeruginosa (strain ATCC 15692 / DSM 22644 / CIP 104116 / JCM 14847 / LMG 12228 / 1C / PRS 101 / PAO1).